Consider the following 914-residue polypeptide: Sensor protein TorS (914 aa).

Residues 1–8 (MNLTLTRR) lie on the Cytoplasmic side of the membrane. Residues 9 to 29 (LWMGFALMALLTLTSTLVGWY) form a helical membrane-spanning segment. At 30–332 (NLRFISQVEK…EKASARGQYS (303 aa)) the chain is on the periplasmic side. Residues 333-353 (LLLLGMVSLCALILILWRVVY) traverse the membrane as a helical segment. Positions 354 to 407 (RSVTRPLAEQTQALQRLLDGDIDSPFPETAGVRELDTIGRLMDAFRSNVHALNR) constitute an HAMP domain. Over 354 to 914 (RSVTRPLAEQ…WLHKKDLNAI (561 aa)) the chain is Cytoplasmic. In terms of domain architecture, Histidine kinase spans 450–664 (AMSHEIRTPL…CFCLRLPLRV (215 aa)). At H453 the chain carries Phosphohistidine; by autocatalysis. Residues 683–798 (RLLLIEDNPL…VLGQLLAHYL (116 aa)) form the Response regulatory domain. Position 733 is a 4-aspartylphosphate (D733). In terms of domain architecture, HPt spans 821 to 914 (GTEKIHEWLV…WLHKKDLNAI (94 aa)). H860 carries the phosphohistidine modification.

In terms of assembly, may form homomultimers. Seems to interact with TorT and TorC apocytochrome. Activation requires a sequential transfer of a phosphate group from a His in the primary transmitter domain, to an Asp in the receiver domain and to a His in the secondary transmitter domain.

Its subcellular location is the cell inner membrane. The enzyme catalyses ATP + protein L-histidine = ADP + protein N-phospho-L-histidine.. With respect to regulation, inhibited by TorC apocytochrome. Its function is as follows. Member of the two-component regulatory system TorS/TorR involved in the anaerobic utilization of trimethylamine-N-oxide (TMAO). Detects the presence of TMAO in the medium and, in response, activates TorR via a four-step phosphorelay. When TMAO is removed, TorS can dephosphorylate TorR, probably by a reverse phosphorelay involving His-860 and Asp-733. The protein is Sensor protein TorS (torS) of Escherichia coli (strain K12).